The chain runs to 233 residues: tRNA (guanine-N(1)-)-methyltransferase (233 aa).

Residues glycine 113 and isoleucine 133–leucine 138 each bind S-adenosyl-L-methionine.

The protein belongs to the RNA methyltransferase TrmD family. In terms of assembly, homodimer.

Its subcellular location is the cytoplasm. It carries out the reaction guanosine(37) in tRNA + S-adenosyl-L-methionine = N(1)-methylguanosine(37) in tRNA + S-adenosyl-L-homocysteine + H(+). Its function is as follows. Specifically methylates guanosine-37 in various tRNAs. This chain is tRNA (guanine-N(1)-)-methyltransferase, found in Ruminiclostridium cellulolyticum (strain ATCC 35319 / DSM 5812 / JCM 6584 / H10) (Clostridium cellulolyticum).